A 328-amino-acid polypeptide reads, in one-letter code: uncharacterized protein (328 aa).

Positions 37–179 (LTEKLLCHQG…AMTLLRCRKI (143 aa)) constitute an SIS domain. 52-57 (GIGKSG) is an ATP binding site. CBS domains lie at 207-264 (PRTE…GGDI) and 273-328 (MTRN…AGLL).

It belongs to the SIS family. GutQ/KpsF subfamily.

This is an uncharacterized protein from Chlamydia trachomatis serovar D (strain ATCC VR-885 / DSM 19411 / UW-3/Cx).